We begin with the raw amino-acid sequence, 496 residues long: Guanosine-5'-triphosphate,3'-diphosphate pyrophosphatase (496 aa).

Belongs to the GppA/Ppx family. GppA subfamily.

It catalyses the reaction guanosine 3'-diphosphate 5'-triphosphate + H2O = guanosine 3',5'-bis(diphosphate) + phosphate + H(+). The protein operates within purine metabolism; ppGpp biosynthesis; ppGpp from GTP: step 2/2. In terms of biological role, catalyzes the conversion of pppGpp to ppGpp. Guanosine pentaphosphate (pppGpp) is a cytoplasmic signaling molecule which together with ppGpp controls the 'stringent response', an adaptive process that allows bacteria to respond to amino acid starvation, resulting in the coordinated regulation of numerous cellular activities. This Aeromonas hydrophila subsp. hydrophila (strain ATCC 7966 / DSM 30187 / BCRC 13018 / CCUG 14551 / JCM 1027 / KCTC 2358 / NCIMB 9240 / NCTC 8049) protein is Guanosine-5'-triphosphate,3'-diphosphate pyrophosphatase.